Consider the following 204-residue polypeptide: Cytochrome c biogenesis ATP-binding export protein CcmA (204 aa).

An ABC transporter domain is found at 3 to 204 (LSGHGLRCVR…ARELRIGGTT (202 aa)). ATP is bound at residue 35-42 (GPNGAGKT).

It belongs to the ABC transporter superfamily. CcmA exporter (TC 3.A.1.107) family. As to quaternary structure, the complex is composed of two ATP-binding proteins (CcmA) and two transmembrane proteins (CcmB).

It is found in the cell inner membrane. It catalyses the reaction heme b(in) + ATP + H2O = heme b(out) + ADP + phosphate + H(+). Part of the ABC transporter complex CcmAB involved in the biogenesis of c-type cytochromes; once thought to export heme, this seems not to be the case, but its exact role is uncertain. Responsible for energy coupling to the transport system. This is Cytochrome c biogenesis ATP-binding export protein CcmA from Nitrobacter hamburgensis (strain DSM 10229 / NCIMB 13809 / X14).